A 160-amino-acid chain; its full sequence is Cyclic pyranopterin monophosphate synthase (160 aa).

Residues Leu75–His77 and Met113–Glu114 contribute to the substrate site. Residue Asp128 is part of the active site.

Belongs to the MoaC family. As to quaternary structure, homohexamer; trimer of dimers.

It catalyses the reaction (8S)-3',8-cyclo-7,8-dihydroguanosine 5'-triphosphate = cyclic pyranopterin phosphate + diphosphate. Its pathway is cofactor biosynthesis; molybdopterin biosynthesis. Functionally, catalyzes the conversion of (8S)-3',8-cyclo-7,8-dihydroguanosine 5'-triphosphate to cyclic pyranopterin monophosphate (cPMP). The polypeptide is Cyclic pyranopterin monophosphate synthase (Methylobacterium sp. (strain 4-46)).